Here is a 206-residue protein sequence, read N- to C-terminus: Dephospho-CoA kinase (206 aa).

A DPCK domain is found at 4 to 200 (IVALTGGIGS…AHYLQLASQF (197 aa)). 12 to 17 (GSGKST) is an ATP binding site.

The protein belongs to the CoaE family.

The protein resides in the cytoplasm. The catalysed reaction is 3'-dephospho-CoA + ATP = ADP + CoA + H(+). It functions in the pathway cofactor biosynthesis; coenzyme A biosynthesis; CoA from (R)-pantothenate: step 5/5. Catalyzes the phosphorylation of the 3'-hydroxyl group of dephosphocoenzyme A to form coenzyme A. The chain is Dephospho-CoA kinase from Shigella boydii serotype 4 (strain Sb227).